The following is a 363-amino-acid chain: Bonnadiene synthase (363 aa).

Positions 93, 98, 234, 238, and 242 each coordinate Mg(2+).

It belongs to the terpene synthase family. Mg(2+) is required as a cofactor.

It carries out the reaction (2E,6E,10E)-geranylgeranyl diphosphate = bonnadiene + diphosphate. It participates in secondary metabolite biosynthesis; terpenoid biosynthesis. Diterpene synthase that catalyzes the conversion of geranylgeranyl diphosphate (GGPP) to bonnadiene. Cannot use geranyl diphosphate (GPP), farnesyl diphosphate (FPP) and geranylfarnesyl diphosphate (GFPP). In Allokutzneria albata (Kibdelosporangium albatum), this protein is Bonnadiene synthase.